The chain runs to 312 residues: Holliday junction branch migration complex subunit RuvB (312 aa).

The tract at residues Met1–Tyr168 is large ATPase domain (RuvB-L). ATP-binding positions include Arg8, Gly49, Lys52, Thr53, Thr54, Glu115–Phe117, Arg158, Tyr168, and Arg206. Thr53 serves as a coordination point for Mg(2+). A small ATPAse domain (RuvB-S) region spans residues Glu169 to Gln234. The tract at residues Asp237–Lys312 is head domain (RuvB-H). Positions 290 and 295 each coordinate DNA.

This sequence belongs to the RuvB family. Homohexamer. Forms an RuvA(8)-RuvB(12)-Holliday junction (HJ) complex. HJ DNA is sandwiched between 2 RuvA tetramers; dsDNA enters through RuvA and exits via RuvB. An RuvB hexamer assembles on each DNA strand where it exits the tetramer. Each RuvB hexamer is contacted by two RuvA subunits (via domain III) on 2 adjacent RuvB subunits; this complex drives branch migration. In the full resolvosome a probable DNA-RuvA(4)-RuvB(12)-RuvC(2) complex forms which resolves the HJ.

The protein localises to the cytoplasm. The catalysed reaction is ATP + H2O = ADP + phosphate + H(+). In terms of biological role, the RuvA-RuvB-RuvC complex processes Holliday junction (HJ) DNA during genetic recombination and DNA repair, while the RuvA-RuvB complex plays an important role in the rescue of blocked DNA replication forks via replication fork reversal (RFR). RuvA specifically binds to HJ cruciform DNA, conferring on it an open structure. The RuvB hexamer acts as an ATP-dependent pump, pulling dsDNA into and through the RuvAB complex. RuvB forms 2 homohexamers on either side of HJ DNA bound by 1 or 2 RuvA tetramers; 4 subunits per hexamer contact DNA at a time. Coordinated motions by a converter formed by DNA-disengaged RuvB subunits stimulates ATP hydrolysis and nucleotide exchange. Immobilization of the converter enables RuvB to convert the ATP-contained energy into a lever motion, pulling 2 nucleotides of DNA out of the RuvA tetramer per ATP hydrolyzed, thus driving DNA branch migration. The RuvB motors rotate together with the DNA substrate, which together with the progressing nucleotide cycle form the mechanistic basis for DNA recombination by continuous HJ branch migration. Branch migration allows RuvC to scan DNA until it finds its consensus sequence, where it cleaves and resolves cruciform DNA. The polypeptide is Holliday junction branch migration complex subunit RuvB (Ureaplasma urealyticum serovar 10 (strain ATCC 33699 / Western)).